Here is a 64-residue protein sequence, read N- to C-terminus: Outer envelope membrane protein 7 (64 aa).

Over 1–11 the chain is Chloroplast intermembrane; sequence MGKTSGAKQAT. A helical transmembrane segment spans residues 12–32; the sequence is VVVAAMALGWLAIEIAFKPFL. The AKR2A-binding sequence (ABS) required for chloroplast outer envelope membrane targeting motif lies at 29–35; that stretch reads KPFLDKF. Topologically, residues 33–64 are cytoplasmic; that stretch reads DKFRSSIDKSDPTKDPDDFDTAATATTSKEGL. The segment covering 39 to 48 has biased composition (basic and acidic residues); it reads IDKSDPTKDP. A disordered region spans residues 39-64; it reads IDKSDPTKDPDDFDTAATATTSKEGL. The segment covering 53–64 has biased composition (low complexity); that stretch reads TAATATTSKEGL.

In terms of assembly, interacts with AKR2A. In terms of tissue distribution, confined to green tissues.

The protein resides in the plastid. It localises to the chloroplast outer membrane. The polypeptide is Outer envelope membrane protein 7 (Arabidopsis thaliana (Mouse-ear cress)).